A 336-amino-acid chain; its full sequence is Heme A synthase (336 aa).

8 helical membrane-spanning segments follow: residues 12–32 (LKLW…VGGL), 97–117 (LLAR…TLYF), 130–150 (IFFL…SGLI), 161–181 (SIHL…ILDI), 194–214 (LFLL…AFLS), 256–276 (FLHR…NFIY), 285–305 (YVLF…ITLI), and 310–330 (ITYA…YFLI). His258 lines the heme pocket. Residue His316 participates in heme binding.

This sequence belongs to the COX15/CtaA family. Type 2 subfamily. Interacts with CtaB. Heme b serves as cofactor.

It is found in the cell membrane. The catalysed reaction is Fe(II)-heme o + 2 A + H2O = Fe(II)-heme a + 2 AH2. Its pathway is porphyrin-containing compound metabolism; heme A biosynthesis; heme A from heme O: step 1/1. In terms of biological role, catalyzes the conversion of heme O to heme A by two successive hydroxylations of the methyl group at C8. The first hydroxylation forms heme I, the second hydroxylation results in an unstable dihydroxymethyl group, which spontaneously dehydrates, resulting in the formyl group of heme A. The protein is Heme A synthase of Pelagibacter ubique (strain HTCC1062).